Consider the following 615-residue polypeptide: DNA mismatch repair protein MutL (615 aa).

The span at 378–391 (PAPASGSRPAAPWP) shows a compositional bias: low complexity. The interval 378–397 (PAPASGSRPAAPWPNAQPGY) is disordered.

This sequence belongs to the DNA mismatch repair MutL/HexB family.

Functionally, this protein is involved in the repair of mismatches in DNA. It is required for dam-dependent methyl-directed DNA mismatch repair. May act as a 'molecular matchmaker', a protein that promotes the formation of a stable complex between two or more DNA-binding proteins in an ATP-dependent manner without itself being part of a final effector complex. The polypeptide is DNA mismatch repair protein MutL (Escherichia coli O127:H6 (strain E2348/69 / EPEC)).